We begin with the raw amino-acid sequence, 199 residues long: LIM domain-containing protein WLIM2b (199 aa).

2 consecutive LIM zinc-binding domains span residues 8-68 and 106-166; these read QKCK…LFKE and EKCA…LFKE.

As to quaternary structure, interacts with F-actin. Expressed in roots, leaves, stems, flowers and siliques. Barely detected in pollen.

The protein resides in the cytoplasm. It is found in the cytoskeleton. Binds to actin filaments and promotes cross-linking into thick bundles. Has an actin-stabilizing activity. The actin regulatory activities are not regulated by pH and [Ca(2+)]. In Arabidopsis thaliana (Mouse-ear cress), this protein is LIM domain-containing protein WLIM2b.